The sequence spans 364 residues: Histidinol-phosphate aminotransferase (364 aa).

Position 224 is an N6-(pyridoxal phosphate)lysine (K224).

Belongs to the class-II pyridoxal-phosphate-dependent aminotransferase family. Histidinol-phosphate aminotransferase subfamily. In terms of assembly, homodimer. The cofactor is pyridoxal 5'-phosphate.

It catalyses the reaction L-histidinol phosphate + 2-oxoglutarate = 3-(imidazol-4-yl)-2-oxopropyl phosphate + L-glutamate. Its pathway is amino-acid biosynthesis; L-histidine biosynthesis; L-histidine from 5-phospho-alpha-D-ribose 1-diphosphate: step 7/9. The polypeptide is Histidinol-phosphate aminotransferase (Anaeromyxobacter sp. (strain Fw109-5)).